The primary structure comprises 262 residues: Tryptophan synthase alpha chain (262 aa).

Active-site proton acceptor residues include Glu-51 and Asp-62.

The protein belongs to the TrpA family. In terms of assembly, tetramer of two alpha and two beta chains.

It carries out the reaction (1S,2R)-1-C-(indol-3-yl)glycerol 3-phosphate + L-serine = D-glyceraldehyde 3-phosphate + L-tryptophan + H2O. It participates in amino-acid biosynthesis; L-tryptophan biosynthesis; L-tryptophan from chorismate: step 5/5. The alpha subunit is responsible for the aldol cleavage of indoleglycerol phosphate to indole and glyceraldehyde 3-phosphate. The chain is Tryptophan synthase alpha chain from Oceanobacillus iheyensis (strain DSM 14371 / CIP 107618 / JCM 11309 / KCTC 3954 / HTE831).